We begin with the raw amino-acid sequence, 383 residues long: Photosynthetic reaction center cytochrome c subunit (383 aa).

The first 22 residues, 1-22 (MNLGKQLTLPAVAVVASVVLLG), serve as a signal peptide directing secretion. Residue C23 is the site of N-palmitoyl cysteine attachment. The S-diacylglycerol cysteine moiety is linked to residue C23. 16 residues coordinate heme: M94, C107, C110, H111, M130, H144, C152, C155, H156, M236, C247, C250, H251, C307, C310, and H311. Residues 335–383 (PAEAAPATEEAPAAEAEAVEAAPVEEAAPAPVEQAAAPVEDAAPAPQQL) are disordered.

In terms of assembly, component of the photosynthetic reaction center composed of protein subunits L (PufL), M (PufM), H (PuhA) and cytochrome C (PufC). The reaction center interacts with light-harvesting antenna complex LH1. Binds 4 heme groups per subunit.

It is found in the cellular chromatophore membrane. Its function is as follows. The reaction center of purple bacteria contains a tightly bound cytochrome molecule which re-reduces the photo oxidized primary electron donor. This chain is Photosynthetic reaction center cytochrome c subunit (pufC), found in Allochromatium vinosum (strain ATCC 17899 / DSM 180 / NBRC 103801 / NCIMB 10441 / D) (Chromatium vinosum).